We begin with the raw amino-acid sequence, 354 residues long: NADH-quinone oxidoreductase subunit H (354 aa).

The next 8 membrane-spanning stretches (helical) occupy residues 16–36 (WLAV…PVMI), 90–110 (YLFI…WAVI), 126–146 (VLYV…SGWA), 170–190 (MGFA…TGIV), 197–217 (IWNW…ISGL), 249–269 (VFFL…AIMF), 290–310 (VPGF…FLWF), and 329–349 (VLIP…YFKV).

The protein belongs to the complex I subunit 1 family. NDH-1 is composed of 14 different subunits. Subunits NuoA, H, J, K, L, M, N constitute the membrane sector of the complex.

The protein localises to the cell inner membrane. The catalysed reaction is a quinone + NADH + 5 H(+)(in) = a quinol + NAD(+) + 4 H(+)(out). Its function is as follows. NDH-1 shuttles electrons from NADH, via FMN and iron-sulfur (Fe-S) centers, to quinones in the respiratory chain. The immediate electron acceptor for the enzyme in this species is believed to be ubiquinone. Couples the redox reaction to proton translocation (for every two electrons transferred, four hydrogen ions are translocated across the cytoplasmic membrane), and thus conserves the redox energy in a proton gradient. This subunit may bind ubiquinone. The chain is NADH-quinone oxidoreductase subunit H from Hydrogenovibrio crunogenus (strain DSM 25203 / XCL-2) (Thiomicrospira crunogena).